A 248-amino-acid chain; its full sequence is Type II secretion system protein N (248 aa).

The Cytoplasmic segment spans residues 1 to 6 (MKLKSG). The helical; Signal-anchor for type II membrane protein transmembrane segment at 7 to 27 (IVTGVALVLAYGLFLASYAPA) threads the bilayer. Residues 28-248 (RLLTAVPLPA…RTLNFQGRLL (221 aa)) lie on the Periplasmic side of the membrane.

Belongs to the GSP N family.

The protein resides in the cell inner membrane. Its function is as follows. Involved in a type II secretion system (T2SS, formerly general secretion pathway, GSP) for the export of proteins. Required for the translocation of the multiple pectic enzymes. This is Type II secretion system protein N (outN) from Pectobacterium carotovorum subsp. carotovorum (Erwinia carotovora subsp. carotovora).